Here is a 423-residue protein sequence, read N- to C-terminus: UDP-N-acetylglucosamine 1-carboxyvinyltransferase 2 (423 aa).

K23–N24 is a phosphoenolpyruvate binding site. UDP-N-acetyl-alpha-D-glucosamine is bound at residue R96. C120 acts as the Proton donor in catalysis. The residue at position 120 (C120) is a 2-(S-cysteinyl)pyruvic acid O-phosphothioketal. UDP-N-acetyl-alpha-D-glucosamine-binding positions include R125–L129, D309, and V331.

It belongs to the EPSP synthase family. MurA subfamily.

It localises to the cytoplasm. It carries out the reaction phosphoenolpyruvate + UDP-N-acetyl-alpha-D-glucosamine = UDP-N-acetyl-3-O-(1-carboxyvinyl)-alpha-D-glucosamine + phosphate. The protein operates within cell wall biogenesis; peptidoglycan biosynthesis. Its function is as follows. Cell wall formation. Adds enolpyruvyl to UDP-N-acetylglucosamine. The sequence is that of UDP-N-acetylglucosamine 1-carboxyvinyltransferase 2 from Streptococcus agalactiae serotype III (strain NEM316).